A 174-amino-acid polypeptide reads, in one-letter code: Crossover junction endodeoxyribonuclease RuvC (174 aa).

Active-site residues include Asp-8, Glu-67, and Asp-139. Residues Asp-8, Glu-67, and Asp-139 each contribute to the Mg(2+) site.

The protein belongs to the RuvC family. Homodimer which binds Holliday junction (HJ) DNA. The HJ becomes 2-fold symmetrical on binding to RuvC with unstacked arms; it has a different conformation from HJ DNA in complex with RuvA. In the full resolvosome a probable DNA-RuvA(4)-RuvB(12)-RuvC(2) complex forms which resolves the HJ. Requires Mg(2+) as cofactor.

It localises to the cytoplasm. It catalyses the reaction Endonucleolytic cleavage at a junction such as a reciprocal single-stranded crossover between two homologous DNA duplexes (Holliday junction).. Its function is as follows. The RuvA-RuvB-RuvC complex processes Holliday junction (HJ) DNA during genetic recombination and DNA repair. Endonuclease that resolves HJ intermediates. Cleaves cruciform DNA by making single-stranded nicks across the HJ at symmetrical positions within the homologous arms, yielding a 5'-phosphate and a 3'-hydroxyl group; requires a central core of homology in the junction. The consensus cleavage sequence is 5'-(A/T)TT(C/G)-3'. Cleavage occurs on the 3'-side of the TT dinucleotide at the point of strand exchange. HJ branch migration catalyzed by RuvA-RuvB allows RuvC to scan DNA until it finds its consensus sequence, where it cleaves and resolves the cruciform DNA. This chain is Crossover junction endodeoxyribonuclease RuvC, found in Pseudomonas fluorescens (strain SBW25).